The primary structure comprises 119 residues: MPRVKRGVTARARHKKVLALAKGFRGRRGNVYRVAKEAVMKAGQYAYRDRRTKKRVFRQLWIARINAAARQCGMTYSQFANGLKKANIEIDRKVLSDIAVHDMAAFASIVDQVKAKLAA.

It belongs to the bacterial ribosomal protein bL20 family.

Binds directly to 23S ribosomal RNA and is necessary for the in vitro assembly process of the 50S ribosomal subunit. It is not involved in the protein synthesizing functions of that subunit. This Albidiferax ferrireducens (strain ATCC BAA-621 / DSM 15236 / T118) (Rhodoferax ferrireducens) protein is Large ribosomal subunit protein bL20.